The chain runs to 197 residues: RNA chaperone ProQ (197 aa).

The tract at residues 115–138 is disordered; it reads RAAAKKAQQKKHPRKPANKNLKKE. Positions 117–131 are enriched in basic residues; the sequence is AAKKAQQKKHPRKPA.

Belongs to the ProQ family.

The protein localises to the cytoplasm. In terms of biological role, RNA chaperone with significant RNA binding, RNA strand exchange and RNA duplexing activities. This Haemophilus influenzae (strain ATCC 51907 / DSM 11121 / KW20 / Rd) protein is RNA chaperone ProQ.